Reading from the N-terminus, the 508-residue chain is Protein S-acyltransferase 18 (508 aa).

Helical transmembrane passes span 17-37 and 42-62; these read IVGA…LGFF and IAVI…IVLF. Residues 158 to 208 form the DHHC domain; that stretch reads SYCSLCDLEVKRSSKHCRTCNRCVEGFDHHCRWLNNCVGKKNYTTFILLMV. Cys188 serves as the catalytic S-palmitoyl cysteine intermediate. The next 2 helical transmembrane spans lie at 203-223 and 250-270; these read FILL…TALA and WALA…SAAM. Positions 443 to 468 are disordered; that stretch reads VSPGRFSSPRRRFSGSSSSTVPSPKQ. Residues 456–466 show a composition bias toward low complexity; sequence SGSSSSTVPSP.

It belongs to the DHHC palmitoyltransferase family.

Its subcellular location is the endoplasmic reticulum membrane. It localises to the cytoplasmic vesicle membrane. The catalysed reaction is L-cysteinyl-[protein] + hexadecanoyl-CoA = S-hexadecanoyl-L-cysteinyl-[protein] + CoA. S-acyltransferase involved in protein lipid modification. The protein is Protein S-acyltransferase 18 (PAT18) of Arabidopsis thaliana (Mouse-ear cress).